Reading from the N-terminus, the 161-residue chain is Extracellular giant hemoglobin major globin subunit B1 (161 aa).

Positions 1–16 are cleaved as a signal peptide; it reads MTILVLFLSCAALASA. The Globin domain maps to 18 to 161; that stretch reads CCSRGDAEVV…YIAAGIGAGL (144 aa). Residues Cys-19 and Cys-149 are joined by a disulfide bond. His-112 contacts heme b.

This sequence belongs to the globin family. As to quaternary structure, the 400 kDa hemoglobin consists of a spherical 24-mer arranged as a double layer of dome-shaped dodecamers. Each dodecamer is composed of the 3-fold trimer of the tetramer A1-A2-B1-B2 having one intra-tetramer (A1-B2) disulfide bond and one inter-tetramer (B1-B2) disulfide bond per tetramer.

The protein localises to the secreted. In terms of biological role, the extracellular giant hemoglobin is able to bind and transport oxygen and sulfide simultaneously and reversibly at two different sites. This Oligobrachia mashikoi (Beard worm) protein is Extracellular giant hemoglobin major globin subunit B1 (ghbB1).